Here is a 339-residue protein sequence, read N- to C-terminus: Dihydroorotate dehydrogenase (quinone) (339 aa).

FMN-binding positions include 62–66 (AGMDK) and Thr86. Lys66 is a binding site for substrate. 111-115 (NRMGF) is a substrate binding site. FMN is bound by residues Asn139 and Asn172. Residue Asn172 participates in substrate binding. Ser175 (nucleophile) is an active-site residue. Position 177 (Asn177) interacts with substrate. Residues Lys217 and Thr245 each contribute to the FMN site. 246–247 (NT) provides a ligand contact to substrate. FMN contacts are provided by residues Gly268, Gly297, and 318-319 (YS).

Belongs to the dihydroorotate dehydrogenase family. Type 2 subfamily. Monomer. FMN serves as cofactor.

Its subcellular location is the cell membrane. It carries out the reaction (S)-dihydroorotate + a quinone = orotate + a quinol. Its pathway is pyrimidine metabolism; UMP biosynthesis via de novo pathway; orotate from (S)-dihydroorotate (quinone route): step 1/1. Catalyzes the conversion of dihydroorotate to orotate with quinone as electron acceptor. The polypeptide is Dihydroorotate dehydrogenase (quinone) (Shewanella baltica (strain OS223)).